Consider the following 188-residue polypeptide: ADP-ribosylation factor J (188 aa).

GTP-binding positions include 34–40, 75–79, and 134–137; these read DGAGKST, DVGGQ, and NKQD.

Belongs to the small GTPase superfamily. Arf family.

It is found in the golgi apparatus. In terms of biological role, GTP-binding protein that may be involved in protein trafficking. May modulate vesicle budding and uncoating within the Golgi apparatus. This Dictyostelium discoideum (Social amoeba) protein is ADP-ribosylation factor J (arrJ).